Reading from the N-terminus, the 558-residue chain is Inositol-3-phosphate synthase (558 aa).

Residues 1–34 (MSPTALDACDHHDSFSLPAQDQSKVHPSARRTPE) form a disordered region. 25 residues coordinate NAD(+): G99, G100, N101, N102, D174, S210, I211, Q221, R224, T262, A263, N264, T265, G313, S314, D338, S341, N372, N373, D374, K387, G439, D440, D468, and S469.

Belongs to the myo-inositol 1-phosphate synthase family. In terms of assembly, homotetramer. NAD(+) serves as cofactor.

Its subcellular location is the cytoplasm. The enzyme catalyses D-glucose 6-phosphate = 1D-myo-inositol 3-phosphate. Its pathway is polyol metabolism; myo-inositol biosynthesis; myo-inositol from D-glucose 6-phosphate: step 1/2. In terms of biological role, key enzyme in myo-inositol biosynthesis pathway that catalyzes the conversion of glucose 6-phosphate to 1-myo-inositol 1-phosphate in a NAD-dependent manner. Rate-limiting enzyme in the synthesis of all inositol-containing compounds. In Cryptococcus neoformans var. grubii serotype A (strain H99 / ATCC 208821 / CBS 10515 / FGSC 9487) (Filobasidiella neoformans var. grubii), this protein is Inositol-3-phosphate synthase.